The sequence spans 256 residues: Proteasome subunit alpha-type 8 (256 aa).

The protein belongs to the peptidase T1A family. Component of the outer alpha-ring of the 20S proteasome core which is composed of 28 subunits that are arranged in four stacked rings, resulting in a barrel-shaped structure. The catalytic chamber with the active sites is on the inside of the barrel. Interacts with canonical subunits of the spermatoproteasome, including proteasome activators PSME4 (also called PA200) and PSME3 (also called PA28-gamma). Interacts with proteasome-interacting proteins chaperones, ubiquitin ligases and ubiquitin specific proteases. Interacts with meiotic proteins cyclin dependent kinase CDK1 and the ATPase TRIP13 as well as proteins of the synaptonemal complex SIX6OS1 and SYCE3.

The protein resides in the nucleus. Its function is as follows. Component of the spermatoproteasome, a proteasome specifically found in testis that promotes acetylation-dependent degradation of histones, thereby participating actively to the exchange of histones during spermatogenesis. The proteasome is a protein complex that degrades unneeded or damaged proteins by proteolysis, a chemical reaction that breaks peptide bonds. Required for 20S core proteasome assembly, essential for the degradation of meiotic proteins RAD51 and RPA1 at late prophase I and the progression of meiosis I during spermatogenesis. Localizes to the synaptonemal complex, a 'zipper'-like structure that holds homologous chromosome pairs in synapsis during meiotic prophase I. The protein is Proteasome subunit alpha-type 8 (PSMA8) of Homo sapiens (Human).